Consider the following 795-residue polypeptide: Phenylalanine--tRNA ligase beta subunit (795 aa).

Residues 39–148 (AGSFHGVVVG…ADAPIGTDIR (110 aa)) enclose the tRNA-binding domain. The 76-residue stretch at 401-476 (PKRATITLRR…RVYGYNNIPD (76 aa)) folds into the B5 domain. 4 residues coordinate Mg(2+): D454, D460, E463, and E464. One can recognise an FDX-ACB domain in the interval 701–794 (SRFPANRRDI…LKERFQASLR (94 aa)).

It belongs to the phenylalanyl-tRNA synthetase beta subunit family. Type 1 subfamily. As to quaternary structure, tetramer of two alpha and two beta subunits. Mg(2+) serves as cofactor.

The protein localises to the cytoplasm. It carries out the reaction tRNA(Phe) + L-phenylalanine + ATP = L-phenylalanyl-tRNA(Phe) + AMP + diphosphate + H(+). In Shigella dysenteriae serotype 1 (strain Sd197), this protein is Phenylalanine--tRNA ligase beta subunit.